The primary structure comprises 220 residues: UPF0643 protein PB2B2.08 (220 aa).

It belongs to the UPF0643 family.

The protein localises to the cytoplasm. Its subcellular location is the nucleus. The polypeptide is UPF0643 protein PB2B2.08 (Schizosaccharomyces pombe (strain 972 / ATCC 24843) (Fission yeast)).